The following is a 235-amino-acid chain: Chromosome partition protein MukE (235 aa).

The segment at 204–235 (QQEPSQSSLLDGFDADDTGHHDSELTMQEGEV) is disordered.

It belongs to the MukE family. In terms of assembly, interacts, and probably forms a ternary complex, with MukF and MukB. The complex formation is stimulated by calcium or magnesium.

The protein resides in the cytoplasm. It is found in the nucleoid. Functionally, involved in chromosome condensation, segregation and cell cycle progression. May participate in facilitating chromosome segregation by condensation DNA from both sides of a centrally located replisome during cell division. Probably acts via its interaction with MukB and MukF. This is Chromosome partition protein MukE from Photobacterium profundum (strain SS9).